The following is an 85-amino-acid chain: Cell division topological specificity factor (85 aa).

This sequence belongs to the MinE family.

Its function is as follows. Prevents the cell division inhibition by proteins MinC and MinD at internal division sites while permitting inhibition at polar sites. This ensures cell division at the proper site by restricting the formation of a division septum at the midpoint of the long axis of the cell. In Shewanella sp. (strain ANA-3), this protein is Cell division topological specificity factor.